We begin with the raw amino-acid sequence, 247 residues long: Phosphate import ATP-binding protein PstB (247 aa).

An ABC transporter domain is found at 2-242 (CRDVNVYYGE…PRHPLTEDYI (241 aa)). 32-39 (GPSGCGKS) contacts ATP.

This sequence belongs to the ABC transporter superfamily. Phosphate importer (TC 3.A.1.7) family. In terms of assembly, the complex is composed of two ATP-binding proteins (PstB), two transmembrane proteins (PstC and PstA) and a solute-binding protein (PstS).

The protein resides in the cell inner membrane. The catalysed reaction is phosphate(out) + ATP + H2O = ADP + 2 phosphate(in) + H(+). Functionally, part of the ABC transporter complex PstSACB involved in phosphate import. Responsible for energy coupling to the transport system. The sequence is that of Phosphate import ATP-binding protein PstB from Methylococcus capsulatus (strain ATCC 33009 / NCIMB 11132 / Bath).